A 488-amino-acid polypeptide reads, in one-letter code: Aerolysin (488 aa).

The signal sequence occupies residues 1–24 (MMNRIITANLAFLASSLMLAQVQA). 2 disulfides stabilise this stretch: Cys43–Cys99 and Cys183–Cys188. The segment at 69–85 (WQITGLADRWVIMGPGY) is interaction with host N-linked glycan. A part of the transmembrane beta-barrel after proteolytic activation of the toxin and insertion into the host membrane region spans residues 256–288 (YSLSEKVTTKNKFQWPLVGETELAIEIAASQSW). The interaction with glycans from host GPI-anchor stretch occupies residues 346–355 (RWGGNAWYTH). Positions 444-488 (TRSAKAAQLRSASAEEVALTSVDLDSEALANEGFGNVSLTIVPVQ) are excised as a propeptide.

This sequence belongs to the aerolysin family. Homodimer in solution; homoheptamer in the host membrane. After binding to GPI-anchored proteins in target membranes and proteolytic removal of the C-terminal propeptide, the protein assembles into a heptameric pre-pore complex. A further conformation change leads to insertion into the host membrane. Proteolytic cleavage and subsequent release of the propeptide trigger a major conformation change, leading to the formation of a heptameric pre-pore that then inserts into the host membrane.

The protein resides in the secreted. The protein localises to the host cell membrane. In terms of biological role, secreted, cytolytic toxin that forms pores in host membranes after proteolytic removal of a C-terminal propeptide, leading to destruction of the membrane permeability barrier and cell death. The pores are formed by transmembrane beta-strands and are approximately 3 nm in diameter. This Aeromonas sobria protein is Aerolysin (asa1).